Consider the following 61-residue polypeptide: Large ribosomal subunit protein eL37 (61 aa).

Residues C19, C22, C34, and C37 each coordinate Zn(2+). The C4-type zinc-finger motif lies at 19-37; it reads CRRCGRNAYNVSKHYCAAC.

The protein belongs to the eukaryotic ribosomal protein eL37 family. It depends on Zn(2+) as a cofactor.

Binds to the 23S rRNA. The sequence is that of Large ribosomal subunit protein eL37 from Saccharolobus islandicus (strain Y.N.15.51 / Yellowstone #2) (Sulfolobus islandicus).